The primary structure comprises 289 residues: Agmatinase (289 aa).

His-112, Asp-135, His-137, Asp-139, Asp-216, and Asp-218 together coordinate Mn(2+).

It belongs to the arginase family. Agmatinase subfamily. Requires Mn(2+) as cofactor.

The enzyme catalyses agmatine + H2O = urea + putrescine. Its pathway is amine and polyamine biosynthesis; putrescine biosynthesis via agmatine pathway; putrescine from agmatine: step 1/1. In terms of biological role, catalyzes the formation of putrescine from agmatine. This chain is Agmatinase (speB), found in Halalkalibacterium halodurans (strain ATCC BAA-125 / DSM 18197 / FERM 7344 / JCM 9153 / C-125) (Bacillus halodurans).